Reading from the N-terminus, the 215-residue chain is Cytochrome b6 (215 aa).

The helical transmembrane segment at 32–52 (IFYCLGGITLTCFLIQFATGF) threads the bilayer. C35 contacts heme c. Heme b contacts are provided by H86 and H100. 3 helical membrane passes run 90–110 (ASMMVLMMILHVFRVYLTGGF), 116–136 (LTWVSGVILAVITVSFGVTGY), and 186–206 (AHTFVLPWLIAVFMLFHFLMI). Positions 187 and 202 each coordinate heme b.

Belongs to the cytochrome b family. PetB subfamily. The 4 large subunits of the cytochrome b6-f complex are cytochrome b6, subunit IV (17 kDa polypeptide, PetD), cytochrome f and the Rieske protein, while the 4 small subunits are PetG, PetL, PetM and PetN. The complex functions as a dimer. It depends on heme b as a cofactor. Heme c is required as a cofactor.

Its subcellular location is the cellular thylakoid membrane. In terms of biological role, component of the cytochrome b6-f complex, which mediates electron transfer between photosystem II (PSII) and photosystem I (PSI), cyclic electron flow around PSI, and state transitions. This chain is Cytochrome b6, found in Desmonostoc sp. (strain PCC 7906) (Nostoc sp. (strain PCC 7906)).